The sequence spans 581 residues: DNA primase (581 aa).

Residues 40-64 (CPFHNEKTPSFTVNGEKQFYHCFGC) form a CHC2-type zinc finger. The Toprim domain maps to 259-341 (NRLLVVEGYM…GRQLRFMFLP (83 aa)). Residues glutamate 265, aspartate 309, and aspartate 311 each coordinate Mg(2+).

The protein belongs to the DnaG primase family. Monomer. Interacts with DnaB. Zn(2+) is required as a cofactor. The cofactor is Mg(2+).

The catalysed reaction is ssDNA + n NTP = ssDNA/pppN(pN)n-1 hybrid + (n-1) diphosphate.. Its function is as follows. RNA polymerase that catalyzes the synthesis of short RNA molecules used as primers for DNA polymerase during DNA replication. This Shigella flexneri protein is DNA primase.